The following is a 354-amino-acid chain: Ornithine transcarbamylase, mitochondrial (354 aa).

The transit peptide at Met1–Gln32 directs the protein to the mitochondrion. Lys70 is subject to N6-acetyllysine; alternate. Lys70 is modified (N6-succinyllysine; alternate). Lys80 carries the N6-succinyllysine modification. Lys88 is modified (N6-acetyllysine; alternate). N6-succinyllysine; alternate is present on Lys88. Ser90–Thr93 contributes to the carbamoyl phosphate binding site. Ser133 bears the Phosphoserine mark. Arg141 provides a ligand contact to carbamoyl phosphate. At Lys144 the chain carries N6-acetyllysine; alternate. Lys144 is modified (N6-succinyllysine; alternate). Carbamoyl phosphate contacts are provided by His168 and Gln171. Asn199 serves as a coordination point for L-ornithine. N6-acetyllysine; alternate occurs at positions 221, 231, and 238. N6-succinyllysine; alternate occurs at positions 221, 231, and 238. The L-ornithine site is built by Asp263, Ser267, and Met268. An N6-succinyllysine mark is found at Lys274 and Lys289. Lys292 is subject to N6-acetyllysine; alternate. Lys292 is modified (N6-succinyllysine; alternate). Residue Cys303 is the Proton acceptor of the active site. Position 303–304 (Cys303–Leu304) interacts with carbamoyl phosphate. At Lys307 the chain carries N6-acetyllysine; alternate. At Lys307 the chain carries N6-succinyllysine; alternate. Arg330 lines the carbamoyl phosphate pocket.

This sequence belongs to the aspartate/ornithine carbamoyltransferase superfamily. OTCase family. As to quaternary structure, homotrimer. Acetylation at Lys-88 negatively regulates ornithine carbamoyltransferase activity in response to nutrient signals.

It is found in the mitochondrion matrix. It carries out the reaction carbamoyl phosphate + L-ornithine = L-citrulline + phosphate + H(+). The protein operates within nitrogen metabolism; urea cycle; L-citrulline from L-ornithine and carbamoyl phosphate: step 1/1. Its activity is regulated as follows. Negatively regulated by lysine acetylation. In terms of biological role, catalyzes the second step of the urea cycle, the condensation of carbamoyl phosphate with L-ornithine to form L-citrulline. The urea cycle ensures the detoxification of ammonia by converting it to urea for excretion. This is Ornithine transcarbamylase, mitochondrial from Rattus norvegicus (Rat).